The primary structure comprises 188 residues: Mitochondrial import receptor subunit TOM20 homolog (188 aa).

Residues 1–12 lie on the Mitochondrial intermembrane side of the membrane; the sequence is MTDTLFGFNKSN. A helical membrane pass occupies residues 13–31; the sequence is VVLAAGVAGAAFLGYCIYF. Topologically, residues 32–188 are cytoplasmic; it reads DHKRINAPDY…ELIDDTDDLE (157 aa). Disordered stretches follow at residues 48 to 67 and 155 to 188; these read KRRA…PAGG and ADEA…DDLE. Residues 58-67 show a composition bias toward low complexity; that stretch reads MAARRPPAGG.

The protein belongs to the Tom20 family. Forms part of the preprotein translocase complex of the outer mitochondrial membrane (TOM complex).

The protein localises to the mitochondrion outer membrane. Central component of the receptor complex responsible for the recognition and translocation of cytosolically synthesized mitochondrial preproteins. Together with TOM22 functions as the transit peptide receptor at the surface of the mitochondrion outer membrane and facilitates the movement of preproteins into the translocation pore. This chain is Mitochondrial import receptor subunit TOM20 homolog (tomm-20), found in Caenorhabditis briggsae.